The following is a 340-amino-acid chain: MGRDEEAAARAEAWNHGFGFIKTSVIKTAIELEIPDILHNHGAPLSLSALSSAVGVPPDRLHRIMRFLTHHGVSKKTASPPGESDYYYAETAVSRSLTKDNLGAFVLLQGAQRGPSACITAQGLKSRERPGVEELGSDPLYEDPIFTKMVFRDAMACHARLTTSAVIENYGEGFRGVGSLVDVGGSYGMTLGMLVEAFPWIRGICYDLPQVVAKAKPLHGVEFVAGSMFESVPEADVVMLMFVLHNWSDNECIDILKRCKEAIPRETGKVMIIDAIIEEDGEGDEFAEARLGLDVTMMAVTFEGKERTHREWAFILKEAGFRKYVVKNIKALESLIEAYP.

Asp207 contacts S-adenosyl-L-methionine. The active-site Proton acceptor is the His245.

This sequence belongs to the class I-like SAM-binding methyltransferase superfamily. Cation-independent O-methyltransferase family. Homodimer. Expressed in leaves.

It carries out the reaction scutellarein 4'-methyl ether + S-adenosyl-L-methionine = ladanein + S-adenosyl-L-homocysteine. It catalyses the reaction acacetin + S-adenosyl-L-methionine = apigenin 4',7-dimethyl ether + S-adenosyl-L-homocysteine. The catalysed reaction is diosmetin + S-adenosyl-L-methionine = luteolin 4',7-dimethyl ether + S-adenosyl-L-homocysteine. The enzyme catalyses chrysoeriol + S-adenosyl-L-methionine = velutin + S-adenosyl-L-homocysteine. It carries out the reaction (2S)-naringenin + S-adenosyl-L-methionine = (2S)-sakuranetin + S-adenosyl-L-homocysteine + H(+). It catalyses the reaction apigenin + S-adenosyl-L-methionine = genkwanin + S-adenosyl-L-homocysteine + H(+). The catalysed reaction is luteolin + S-adenosyl-L-methionine = luteolin 7-methyl ether + S-adenosyl-L-homocysteine + H(+). The enzyme catalyses scutellarein + S-adenosyl-L-methionine = scutellarein 7-methyl ether + S-adenosyl-L-homocysteine. Its pathway is flavonoid metabolism. Functionally, flavonoid 7-O-methyltransferase involved in the biosynthesis of polymethoxylated flavonoids natural products such as nevadensin and salvigenin, aroma compounds which contribute to the flavor of sweet basil, and exhibit pharmacological activities such as anti-allergic, anti-oxidant, antibacterial, anti-proliferative, and anti-inflammatory effects. Catalyzes S-adenosylmethionine-dependent regioselective 7-O-methylation of flavonoids; active on various hydroxylated flavonoid substrates, including apigenin (API) and luteolin (LUT), and, with a lower efficiency, scutellarein (SCU), naringenin (NAR), chrysoeriol (CHRYS), diosmetin (DIOS), acacetin (ACA) and scutellarein-7-methyl ether (SCU7Me). This is Flavonoid 7-O-methyltransferase 2 from Ocimum basilicum (Sweet basil).